The primary structure comprises 66 residues: Large ribosomal subunit protein bL35 (66 aa).

Belongs to the bacterial ribosomal protein bL35 family.

The chain is Large ribosomal subunit protein bL35 from Borreliella afzelii (strain PKo) (Borrelia afzelii).